We begin with the raw amino-acid sequence, 827 residues long: N-terminal kinase-like protein (827 aa).

The 309-residue stretch at 1-309 (MWFWSRDPAR…PEDFCRHKIL (309 aa)) folds into the Protein kinase domain. HEAT repeat units lie at residues 345–383 (IIPVVVKMFSSTDRAMRIRLLQQMENFIQYLNEPTVNAQ), 384–422 (IFPHVVHGFMDTNPAIREQTVKSMLLLAPKLNENNLNME), and 502–540 (VLPVLCGVTVDPEKNVREQAFKAIRSFLDKLETVSEDPS). Positions 586–624 (DAAASEGASAPSTASEASKPDTAPSSSAPPAAASTAPTS) are enriched in low complexity. Positions 586–827 (DAAASEGASA…PLKLGVRKLD (242 aa)) are disordered. Residues 630–640 (EKGAPDNSLDR) are compositionally biased toward basic and acidic residues. A compositionally biased stretch (acidic residues) spans 641–652 (WDDEDWGSLEDA). A compositionally biased stretch (basic and acidic residues) spans 667–678 (DWGHGKTQEKTV). Composition is skewed to polar residues over residues 679 to 690 (DFSSSRSKTKQV) and 737 to 746 (NWDTSGSSGR). The segment covering 774-783 (GGDDNWESVE) has biased composition (acidic residues). Residues 788–817 (LSKAEMARKKREERQKEIEAKRAERRAAKG) adopt a coiled-coil conformation. A compositionally biased stretch (basic and acidic residues) spans 792-814 (EMARKKREERQKEIEAKRAERRA).

Belongs to the protein kinase superfamily.

In terms of biological role, regulates COPI-mediated retrograde protein traffic at the interface between the Golgi apparatus and the endoplasmic reticulum. Involved in the maintenance of the Golgi apparatus morphology. This is N-terminal kinase-like protein (scyl1) from Xenopus tropicalis (Western clawed frog).